We begin with the raw amino-acid sequence, 569 residues long: MATPALISETEAWKDLKAHLEGIKRTHLRELMGDTERCQSMMVEFDNIFLDYSRQQASPDTINKLYKLAEAAHLKQKIDRMYNGDHINSTENRSVLHVALRAPRNSAICSDGKNVVPDVWNVLDKIKDFSERVRNGSWVGATGKELKDVIAVGIGGSFLGPLFVHTALQTDPEASKNARGRELRFLANVDPIDAARNISGLNPETTLVVVVSKTFTTAETMLNARTLREWISSALGVAAVAKHMVAVSTNLPLVEKFGIDPNNAFAFWDWVGGRYSVCSAVGVLPLSLQYGFAVVEKFLQGAHNIDQHFSSAPFEKNIPVLLGLLSVWNVSFLGYPARAILPYSQALEKLAPHIQQVSMESNGKGVSIDGLPLPFESGEIDFGEPGTNGQHSFYQLIHQGRVIPCDFIGVVKSQQPVYLKGEVVNNHDELMSNFFAQPDALAYGKTPEELKKENVSEHLIPHKTFTGNRPCLSILLPTLDAYRIGQLLAIYEHRVAVQGFVWGINSFDQWGVELGKSLATQVRKQLHASRVKGEPVEEGFNFSTKTLLTRYLQATTDVPADPSTLLPNI.

Glutamate 360 functions as the Proton donor in the catalytic mechanism. Active-site residues include histidine 391 and lysine 516.

It belongs to the GPI family. As to quaternary structure, homodimer.

The protein localises to the cytoplasm. The enzyme catalyses alpha-D-glucose 6-phosphate = beta-D-fructose 6-phosphate. It participates in carbohydrate degradation; glycolysis; D-glyceraldehyde 3-phosphate and glycerone phosphate from D-glucose: step 2/4. In Clarkia lewisii (Farewell-to-spring), this protein is Glucose-6-phosphate isomerase, cytosolic 2A (PGIC2-A).